The chain runs to 255 residues: High-affinity branched-chain amino acid transport ATP-binding protein BraF (255 aa).

Residues 6–254 enclose the ABC transporter domain; sequence LEVSGLTMRF…PDVIKAYLGE (249 aa). 38–45 provides a ligand contact to ATP; the sequence is GPNGAGKT.

Belongs to the ABC transporter superfamily.

Its subcellular location is the cell inner membrane. Functionally, component of the high affinity leucine, isoleucine, valine, transport system (LIV-I), which is operative without Na(+) and is specific for alanine and threonine, in addition to branched-chain amino acids. The polypeptide is High-affinity branched-chain amino acid transport ATP-binding protein BraF (braF) (Pseudomonas aeruginosa (strain ATCC 15692 / DSM 22644 / CIP 104116 / JCM 14847 / LMG 12228 / 1C / PRS 101 / PAO1)).